A 488-amino-acid chain; its full sequence is Bifunctional protein GlmU (488 aa).

Positions M1 to R237 are pyrophosphorylase. Residues L13–G16, K27, Q82, G87–T88, S110–D112, G149, E164, N179, and N235 each bind UDP-N-acetyl-alpha-D-glucosamine. D112 contacts Mg(2+). N235 provides a ligand contact to Mg(2+). Residues V238–A258 form a linker region. The tract at residues G259–S488 is N-acetyltransferase. 2 residues coordinate UDP-N-acetyl-alpha-D-glucosamine: R341 and K359. The active-site Proton acceptor is H371. Y374 and N385 together coordinate UDP-N-acetyl-alpha-D-glucosamine. Acetyl-CoA is bound by residues A388, N394–Y395, S413, A431, and R448. Residues A459 to S488 are disordered. Over residues R478–S488 the composition is skewed to basic residues.

This sequence in the N-terminal section; belongs to the N-acetylglucosamine-1-phosphate uridyltransferase family. It in the C-terminal section; belongs to the transferase hexapeptide repeat family. In terms of assembly, homotrimer. Requires Mg(2+) as cofactor.

It is found in the cytoplasm. It carries out the reaction alpha-D-glucosamine 1-phosphate + acetyl-CoA = N-acetyl-alpha-D-glucosamine 1-phosphate + CoA + H(+). It catalyses the reaction N-acetyl-alpha-D-glucosamine 1-phosphate + UTP + H(+) = UDP-N-acetyl-alpha-D-glucosamine + diphosphate. It participates in nucleotide-sugar biosynthesis; UDP-N-acetyl-alpha-D-glucosamine biosynthesis; N-acetyl-alpha-D-glucosamine 1-phosphate from alpha-D-glucosamine 6-phosphate (route II): step 2/2. Its pathway is nucleotide-sugar biosynthesis; UDP-N-acetyl-alpha-D-glucosamine biosynthesis; UDP-N-acetyl-alpha-D-glucosamine from N-acetyl-alpha-D-glucosamine 1-phosphate: step 1/1. The protein operates within bacterial outer membrane biogenesis; LPS lipid A biosynthesis. In terms of biological role, catalyzes the last two sequential reactions in the de novo biosynthetic pathway for UDP-N-acetylglucosamine (UDP-GlcNAc). The C-terminal domain catalyzes the transfer of acetyl group from acetyl coenzyme A to glucosamine-1-phosphate (GlcN-1-P) to produce N-acetylglucosamine-1-phosphate (GlcNAc-1-P), which is converted into UDP-GlcNAc by the transfer of uridine 5-monophosphate (from uridine 5-triphosphate), a reaction catalyzed by the N-terminal domain. The chain is Bifunctional protein GlmU from Anaeromyxobacter sp. (strain K).